The chain runs to 132 residues: Large ribosomal subunit protein uL14 (132 aa).

Belongs to the universal ribosomal protein uL14 family. As to quaternary structure, the L3/L14/L24e cluster may contact the 16S rRNA in 2 intersubunit bridges. Part of the 50S ribosomal subunit. Forms a cluster with proteins L3 and L24e.

Its function is as follows. Forms part of two intersubunit bridges in the 70S ribosome. Binds to 23S rRNA. This chain is Large ribosomal subunit protein uL14, found in Haloarcula marismortui (strain ATCC 43049 / DSM 3752 / JCM 8966 / VKM B-1809) (Halobacterium marismortui).